The sequence spans 211 residues: Urease accessory protein UreG (211 aa).

16 to 23 (GPVGSGKT) contacts GTP.

It belongs to the SIMIBI class G3E GTPase family. UreG subfamily. Homodimer. UreD, UreF and UreG form a complex that acts as a GTP-hydrolysis-dependent molecular chaperone, activating the urease apoprotein by helping to assemble the nickel containing metallocenter of UreC. The UreE protein probably delivers the nickel.

The protein resides in the cytoplasm. Facilitates the functional incorporation of the urease nickel metallocenter. This process requires GTP hydrolysis, probably effectuated by UreG. This is Urease accessory protein UreG from Janthinobacterium sp. (strain Marseille) (Minibacterium massiliensis).